Here is a 243-residue protein sequence, read N- to C-terminus: Undecaprenyl-phosphate mannosyltransferase (243 aa).

This sequence belongs to the glycosyltransferase 2 family.

It catalyses the reaction di-trans,octa-cis-undecaprenyl phosphate + GDP-alpha-D-mannose = D-mannosyl di-trans,octa-cis-undecaprenyl phosphate + GDP. In terms of biological role, catalyzes the transfer of mannose from GDP-mannose to D-mannosyl-1-phosphoundecaprenol. In Micrococcus luteus (strain ATCC 4698 / DSM 20030 / JCM 1464 / CCM 169 / CCUG 5858 / IAM 1056 / NBRC 3333 / NCIMB 9278 / NCTC 2665 / VKM Ac-2230) (Micrococcus lysodeikticus), this protein is Undecaprenyl-phosphate mannosyltransferase.